The sequence spans 441 residues: Ribulose bisphosphate carboxylase large chain (441 aa).

N6,N6,N6-trimethyllysine is present on Lys-5. Residues Asn-114 and Thr-164 each coordinate substrate. Residue Lys-166 is the Proton acceptor of the active site. Lys-168 contacts substrate. Mg(2+) contacts are provided by Lys-192, Asp-194, and Glu-195. Lys-192 is subject to N6-carboxylysine. His-285 acts as the Proton acceptor in catalysis. Arg-286, His-318, and Ser-370 together coordinate substrate.

Belongs to the RuBisCO large chain family. Type I subfamily. Heterohexadecamer of 8 large chains and 8 small chains; disulfide-linked. The disulfide link is formed within the large subunit homodimers. Mg(2+) serves as cofactor. The disulfide bond which can form in the large chain dimeric partners within the hexadecamer appears to be associated with oxidative stress and protein turnover.

It is found in the plastid. The protein localises to the chloroplast. It carries out the reaction 2 (2R)-3-phosphoglycerate + 2 H(+) = D-ribulose 1,5-bisphosphate + CO2 + H2O. It catalyses the reaction D-ribulose 1,5-bisphosphate + O2 = 2-phosphoglycolate + (2R)-3-phosphoglycerate + 2 H(+). Functionally, ruBisCO catalyzes two reactions: the carboxylation of D-ribulose 1,5-bisphosphate, the primary event in carbon dioxide fixation, as well as the oxidative fragmentation of the pentose substrate in the photorespiration process. Both reactions occur simultaneously and in competition at the same active site. The polypeptide is Ribulose bisphosphate carboxylase large chain (Begonia metallica x Begonia sanguinea).